Consider the following 451-residue polypeptide: MNKKILFLGVGGIGVSALAIAAKRLGAHVAGYDSVANKLTAKLEALGIVIFTSPNGVDVANFDIVVYSSAILSSHPLLSQARSLGIQCLQRAMFLAVLMKDFSYSIAITGTHGKTTTSSVLATLLCQLDKYSSFIVGGVVKYADSNIQVNGTDKLVIEADESDASFLFLSPQVVIITNIDLDHMATYNNSYQTLLENFTDFVSKESVKSIYLCVDDQGCRDLLAKYNQSDKNVTSYGFSINADVQIYDYHIIDEITHFKIRYKGDDLSFKLQLPGRYNVQNATACIIACLDLGFKYEDIRNALIKVTGVARRFDLYTKVISGHQVTVIDDYGHHPVEVANSISAVRDRYPNKKIIHVFQPHRYTRNRDLIKDWPKALSLADQLILLPTYSADEQIIKGAESQDIVKGLSGYLLADGFDHAIYFLEKLANENTVILIQGAGDVTNLVEILSE.

110–116 (GTHGKTT) serves as a coordination point for ATP.

It belongs to the MurCDEF family.

It localises to the cytoplasm. The enzyme catalyses UDP-N-acetyl-alpha-D-muramate + L-alanine + ATP = UDP-N-acetyl-alpha-D-muramoyl-L-alanine + ADP + phosphate + H(+). It functions in the pathway cell wall biogenesis; peptidoglycan biosynthesis. Cell wall formation. This Francisella tularensis subsp. tularensis (strain WY96-3418) protein is UDP-N-acetylmuramate--L-alanine ligase.